The sequence spans 3411 residues: Genome polyprotein (3411 aa).

The Cytoplasmic portion of the chain corresponds to 1–104 (MSGRKAQGKT…LSSRKRRSHD (104 aa)). Residues 38–72 (PGPSRGVQGFIFFFLFNILTGKKITAHLKRLWKML) are hydrophobic; homodimerization of capsid protein C. Residues 102 to 121 (SHDVLTVQFLILGMLLMTGG) constitute a propeptide, ER anchor for the capsid protein C, removed in mature form by serine protease NS3. Residues 105-125 (VLTVQFLILGMLLMTGGVTLV) traverse the membrane as a helical segment. Over 126 to 244 (RKNRWLLLNV…GERQLQKIER (119 aa)) the chain is Extracellular. N-linked (GlcNAc...) asparagine; by host glycans are attached at residues Asn134 and Asn150. Residues 245 to 265 (WLVRNPFFAVTALTIAYLVGS) form a helical membrane-spanning segment. The Cytoplasmic segment spans residues 266 to 270 (NMTQR). The chain crosses the membrane as a helical span at residues 271–285 (VVIALLVLAVGPAYS). Residues 286–730 (AHCIGITDRD…TVFGSAFQGL (445 aa)) lie on the Extracellular side of the membrane. Cystine bridges form between Cys288-Cys315, Cys345-Cys401, Cys345-Cys406, Cys359-Cys390, Cys377-Cys401, Cys377-Cys406, Cys467-Cys568, and Cys585-Cys615. Residues 383–396 (DRGWGNGCGLFGKG) form a fusion peptide region. The chain crosses the membrane as a helical span at residues 731-751 (FGGLNWITKVIMGAVLIWVGI). The Extracellular segment spans residues 752 to 757 (NTRNMT). The helical transmembrane segment at 758–778 (MSMSMILVGVIMMFLSLGVGA) threads the bilayer. The Extracellular portion of the chain corresponds to 779–1132 (DQGCAINFGK…LVRSWVTAGE (354 aa)). 6 cysteine pairs are disulfide-bonded: Cys782–Cys793, Cys833–Cys921, Cys957–Cys1002, Cys1058–Cys1107, Cys1069–Cys1091, and Cys1090–Cys1094. N-linked (GlcNAc...) asparagine; by host glycans are attached at residues Asn908 and Asn986. The helical transmembrane segment at 1133 to 1153 (IHAVPFGLVSMMIAMEVVLRK) threads the bilayer. Topologically, residues 1154–1201 (RQGPKQMLVGGVVLLGAMLVGQVTLLDLLKLTVAVGLHFHEMNNGGDA) are cytoplasmic. Residues 1202–1222 (MYMALIAAFSIRPGLLIGFGL) traverse the membrane as a helical segment. At 1223–1287 (RTLWSPRERL…ILPLMALLTP (65 aa)) the chain is on the lumenal side. Residues 1288–1308 (VTMAEVRLATMLFCTVVIIGV) traverse the membrane as a helical segment. Residues 1309–1355 (LHQNSKDTSMQKTIPLVALTLTSYLGLTQPFLGLCAFLATRIFGRRS) are Cytoplasmic-facing. Residues 1356–1376 (IPVNEALAAAGLVGVLAGLAF) form a helical membrane-spanning segment. Over 1377–1378 (QE) the chain is Lumenal. Residues 1379–1399 (MENFLGPIAVGGILMMLVSVA) form a helical membrane-spanning segment. At 1400–1456 (GRVDGLELKKLGEVSWEEEAEISGSSARYDVALSEQGEFKLLSEEKVPWDQVVMTSL) the chain is on the cytoplasmic side. The interacts with and activates NS3 protease stretch occupies residues 1407-1446 (LKKLGEVSWEEEAEISGSSARYDVALSEQGEFKLLSEEKV). An intramembrane region (helical) is located at residues 1457–1477 (ALVGAAIHPFALLLVLAGWLF). The Cytoplasmic segment spans residues 1478 to 2157 (HVRGARRSGD…RNALSMMPEA (680 aa)). The 181-residue stretch at 1485–1665 (SGDVLWDIPT…EVKEEGKEEL (181 aa)) folds into the Peptidase S7 domain. Residues His1537, Asp1561, and Ser1622 each act as charge relay system; for serine protease NS3 activity in the active site. A Helicase ATP-binding domain is found at 1669-1825 (PTMLKKGMTT…HSNGEIEDVQ (157 aa)). The tract at residues 1673–1676 (KKGM) is important for RNA-binding. 1682–1689 (FHPGAGKT) provides a ligand contact to ATP. Residues 1773–1776 (DEAH) carry the DEAH box motif. The Helicase C-terminal domain occupies 1820–1997 (EIEDVQTDIP…VRGGMVAPLY (178 aa)). Lys1877 is modified (N6-acetyllysine; by host). Residues 1942–1961 (AAQRRGRIGRNPNRDGDSYY) form a disordered region. Residues 2158 to 2178 (MTIVMLFILAGLLTSGMVIFF) traverse the membrane as a helical segment. Over 2179-2186 (MSPKGISR) the chain is Lumenal. The segment at residues 2187 to 2207 (MSMAMGTMAGCGYLMFLGGVK) is an intramembrane region (helical). Topologically, residues 2208 to 2209 (PT) are lumenal. Residues 2210–2230 (HISYIMLIFFVLMVVVIPEPG) form a helical membrane-spanning segment. Residues 2231–2241 (QQRSIQDNQVA) are Cytoplasmic-facing. A helical membrane pass occupies residues 2242 to 2262 (YLIIGILTLVSVVAANELGML). The Lumenal segment spans residues 2263–2293 (EKTKEDLFGKKNLIPSSASPWSWPDLDLKPG). An intramembrane region (helical) is located at residues 2294-2314 (AAWTVYVGIVTMLSPMLHHWI). The Lumenal segment spans residues 2315–2360 (KVEYGNLSLSGIAQSASVLSFMDKGIPFMKMNISVIILLVSGWNSI). Residues 2361–2380 (TVMPLLCGIGCAMLHWSLIL) form a helical membrane-spanning segment. Topologically, residues 2381 to 2421 (PGIKAQQSKLAQRRVFHGVAKNPVVDGNPTVDIEEAPEMPA) are cytoplasmic. A helical membrane pass occupies residues 2422–2442 (LYEKKLALYLLLALSLASVAM). Topologically, residues 2443–2445 (CRT) are lumenal. Residues 2446–2466 (PFSLAEGIVLASAALGPLIEG) traverse the membrane as a helical segment. The Cytoplasmic segment spans residues 2467-3411 (NTSLLWNGPM…DADLQPGELI (945 aa)). Residues 2507 to 2771 (GSANGKTLGE…DVILPIGTRS (265 aa)) form the mRNA cap 0-1 NS5-type MT domain. Ser2562 lines the S-adenosyl-L-methionine pocket. Ser2562 is subject to Phosphoserine. The For 2'-O-MTase activity role is filled by Lys2567. Residues Gly2592, Trp2593, Thr2610, Leu2611, Asp2637, and Ile2638 each coordinate S-adenosyl-L-methionine. The active-site For 2'-O-MTase activity is the Asp2652. Ile2653 contributes to the S-adenosyl-L-methionine binding site. Catalysis depends on for 2'-O-MTase activity residues Lys2688 and Glu2724. Tyr2726 is an S-adenosyl-L-methionine binding site. The Nuclear localization signal motif lies at 2878 to 2911 (RKIMKVVNRWLFRHLAREKNPRLCTKEEFIAKVR). Zn(2+) is bound by residues Glu2945, His2949, Cys2954, and Cys2957. The RdRp catalytic domain occupies 3035–3187 (GGFYADDTAG…RPIDDRFGLA (153 aa)). Positions 3222, 3238, and 3357 each coordinate Zn(2+).

In the N-terminal section; belongs to the class I-like SAM-binding methyltransferase superfamily. mRNA cap 0-1 NS5-type methyltransferase family. In terms of assembly, homodimer. Interacts (via N-terminus) with host EXOC1 (via C-terminus); this interaction results in EXOC1 degradation through the proteasome degradation pathway. Forms heterodimers with envelope protein E in the endoplasmic reticulum and Golgi. As to quaternary structure, homodimer; in the endoplasmic reticulum and Golgi. Interacts with protein prM. Interacts with non-structural protein 1. In terms of assembly, homodimer; Homohexamer when secreted. Interacts with envelope protein E. NS1 interacts with NS4B. Interacts with host complement protein CFH; this interaction leads to the degradation of C3. Interacts (via N-terminus) with serine protease NS3. As to quaternary structure, forms a heterodimer with serine protease NS3. May form homooligomers. In terms of assembly, forms a heterodimer with NS2B. Interacts with non-structural protein 2A (via N-terminus). Interacts with NS4B. Interacts with unphosphorylated RNA-directed RNA polymerase NS5; this interaction stimulates RNA-directed RNA polymerase NS5 guanylyltransferase activity. NS3 interacts with host PDCD6IP; this interaction contributes to virion release. Interacts with serine protease NS3. As to quaternary structure, homodimer. Interacts with host STAT2; this interaction prevents the establishment of cellular antiviral state. Interacts with serine protease NS3. Interacts with host TRIM23; this interaction leads to NS5 ubiquitination. Specific enzymatic cleavages in vivo yield mature proteins. The nascent capsid protein C contains a C-terminal hydrophobic domain that act as a signal sequence for translocation of prM into the lumen of the ER. Mature capsid protein C is cleaved at a site upstream of this hydrophobic domain by NS3. prM is cleaved in post-Golgi vesicles by a host furin, releasing the mature small envelope protein M, and peptide pr. Non-structural protein 2A-alpha, a C-terminally truncated form of non-structural protein 2A, results from partial cleavage by NS3. Specific enzymatic cleavages in vivo yield mature proteins peptide 2K acts as a signal sequence and is removed from the N-terminus of NS4B by the host signal peptidase in the ER lumen. Signal cleavage at the 2K-4B site requires a prior NS3 protease-mediated cleavage at the 4A-2K site. In terms of processing, cleaved in post-Golgi vesicles by a host furin, releasing the mature small envelope protein M, and peptide pr. This cleavage is incomplete as up to 30% of viral particles still carry uncleaved prM. Post-translationally, N-glycosylated. N-glycosylated. The excreted form is glycosylated and this is required for efficient secretion of the protein from infected cells. In terms of processing, polyubiquitinated; ubiquitination is probably mediated by host TRIM23 and is prerequisite for NS5-STAT2 interaction. NS5 is not ISGylated or sumoylated. Post-translationally, acetylated by host KAT5. Acetylation modulates NS3 RNA-binding and unwinding activities and plays an important positive role for viral replication. Phosphorylated on serines residues. This phosphorylation may trigger NS5 nuclear localization.

It localises to the virion. The protein resides in the host nucleus. It is found in the host cytoplasm. The protein localises to the host perinuclear region. Its subcellular location is the secreted. It localises to the virion membrane. The protein resides in the host endoplasmic reticulum membrane. It catalyses the reaction Selective hydrolysis of -Xaa-Xaa-|-Yaa- bonds in which each of the Xaa can be either Arg or Lys and Yaa can be either Ser or Ala.. The enzyme catalyses RNA(n) + a ribonucleoside 5'-triphosphate = RNA(n+1) + diphosphate. It carries out the reaction a ribonucleoside 5'-triphosphate + H2O = a ribonucleoside 5'-diphosphate + phosphate + H(+). The catalysed reaction is ATP + H2O = ADP + phosphate + H(+). It catalyses the reaction a 5'-end (5'-triphosphoguanosine)-ribonucleoside in mRNA + S-adenosyl-L-methionine = a 5'-end (N(7)-methyl 5'-triphosphoguanosine)-ribonucleoside in mRNA + S-adenosyl-L-homocysteine. The enzyme catalyses a 5'-end (N(7)-methyl 5'-triphosphoguanosine)-ribonucleoside in mRNA + S-adenosyl-L-methionine = a 5'-end (N(7)-methyl 5'-triphosphoguanosine)-(2'-O-methyl-ribonucleoside) in mRNA + S-adenosyl-L-homocysteine + H(+). Functionally, plays a role in virus budding by binding to the cell membrane and gathering the viral RNA into a nucleocapsid that forms the core of a mature virus particle. During virus entry, may induce genome penetration into the host cytoplasm after hemifusion induced by the surface proteins. Can migrate to the cell nucleus where it modulates host functions. Its function is as follows. Inhibits RNA silencing by interfering with host Dicer. In terms of biological role, prevents premature fusion activity of envelope proteins in trans-Golgi by binding to envelope protein E at pH6.0. After virion release in extracellular space, gets dissociated from E dimers. Acts as a chaperone for envelope protein E during intracellular virion assembly by masking and inactivating envelope protein E fusion peptide. prM is the only viral peptide matured by host furin in the trans-Golgi network probably to avoid catastrophic activation of the viral fusion activity in acidic Golgi compartment prior to virion release. prM-E cleavage is inefficient, and many virions are only partially matured. These uncleaved prM would play a role in immune evasion. Functionally, may play a role in virus budding. Exerts cytotoxic effects by activating a mitochondrial apoptotic pathway through M ectodomain. May display a viroporin activity. Its function is as follows. Binds to host cell surface receptor and mediates fusion between viral and cellular membranes. Envelope protein is synthesized in the endoplasmic reticulum in the form of heterodimer with protein prM. They play a role in virion budding in the ER, and the newly formed immature particle is covered with 60 spikes composed of heterodimer between precursor prM and envelope protein E. The virion is transported to the Golgi apparatus where the low pH causes dissociation of PrM-E heterodimers and formation of E homodimers. prM-E cleavage is inefficient, and many virions are only partially matured. These uncleaved prM would play a role in immune evasion. In terms of biological role, involved in immune evasion, pathogenesis and viral replication. Once cleaved off the polyprotein, is targeted to three destinations: the viral replication cycle, the plasma membrane and the extracellular compartment. Essential for viral replication. Required for formation of the replication complex and recruitment of other non-structural proteins to the ER-derived membrane structures. Excreted as a hexameric lipoparticle that plays a role against host immune response. Antagonizing the complement function. Binds to the host macrophages and dendritic cells. Inhibits signal transduction originating from Toll-like receptor 3 (TLR3). Component of the viral RNA replication complex that functions in virion assembly and antagonizes the host immune response. Functionally, required cofactor for the serine protease function of NS3. May have membrane-destabilizing activity and form viroporins. Its function is as follows. Displays three enzymatic activities: serine protease, NTPase and RNA helicase. NS3 serine protease, in association with NS2B, performs its autocleavage and cleaves the polyprotein at dibasic sites in the cytoplasm: C-prM, NS2A-NS2B, NS2B-NS3, NS3-NS4A, NS4A-2K and NS4B-NS5. NS3 RNA helicase binds RNA and unwinds dsRNA in the 3' to 5' direction. Also plays a role in virus assembly. In terms of biological role, regulates the ATPase activity of the NS3 helicase activity. NS4A allows NS3 helicase to conserve energy during unwinding. Functions as a signal peptide for NS4B and is required for the interferon antagonism activity of the latter. Functionally, induces the formation of ER-derived membrane vesicles where the viral replication takes place. Inhibits interferon (IFN)-induced host STAT1 phosphorylation and nuclear translocation, thereby preventing the establishment of cellular antiviral state by blocking the IFN-alpha/beta pathway. Its function is as follows. Replicates the viral (+) and (-) RNA genome, and performs the capping of genomes in the cytoplasm. NS5 methylates viral RNA cap at guanine N-7 and ribose 2'-O positions. Besides its role in RNA genome replication, also prevents the establishment of cellular antiviral state by blocking the interferon-alpha/beta (IFN-alpha/beta) signaling pathway. IFN-I induces binding of NS5 to host IFN-activated transcription factor STAT2, preventing its transcriptional activity. Host TRIM23 is the E3 ligase that interacts with and polyubiquitinates NS5 to promote its binding to STAT2 and trigger IFN-I signaling inhibition. The chain is Genome polyprotein from Yellow fever virus (strain Ghana/Asibi/1927) (YFV).